The sequence spans 79 residues: Exodeoxyribonuclease 7 small subunit (79 aa).

The protein belongs to the XseB family. As to quaternary structure, heterooligomer composed of large and small subunits.

It localises to the cytoplasm. It carries out the reaction Exonucleolytic cleavage in either 5'- to 3'- or 3'- to 5'-direction to yield nucleoside 5'-phosphates.. Its function is as follows. Bidirectionally degrades single-stranded DNA into large acid-insoluble oligonucleotides, which are then degraded further into small acid-soluble oligonucleotides. The chain is Exodeoxyribonuclease 7 small subunit from Geobacillus kaustophilus (strain HTA426).